A 196-amino-acid chain; its full sequence is Peptide deformylase (196 aa).

Residues Cys-123 and His-166 each coordinate Fe cation. Glu-167 is an active-site residue. His-170 contributes to the Fe cation binding site.

The protein belongs to the polypeptide deformylase family. Fe(2+) is required as a cofactor.

The enzyme catalyses N-terminal N-formyl-L-methionyl-[peptide] + H2O = N-terminal L-methionyl-[peptide] + formate. Functionally, removes the formyl group from the N-terminal Met of newly synthesized proteins. Requires at least a dipeptide for an efficient rate of reaction. N-terminal L-methionine is a prerequisite for activity but the enzyme has broad specificity at other positions. The sequence is that of Peptide deformylase from Lactococcus lactis subsp. lactis (strain IL1403) (Streptococcus lactis).